The sequence spans 497 residues: Probable cytosol aminopeptidase (497 aa).

Residues K267 and D272 each coordinate Mn(2+). The active site involves K279. Residues D290, D349, and E351 each contribute to the Mn(2+) site. R353 is an active-site residue.

The protein belongs to the peptidase M17 family. Mn(2+) serves as cofactor.

Its subcellular location is the cytoplasm. The catalysed reaction is Release of an N-terminal amino acid, Xaa-|-Yaa-, in which Xaa is preferably Leu, but may be other amino acids including Pro although not Arg or Lys, and Yaa may be Pro. Amino acid amides and methyl esters are also readily hydrolyzed, but rates on arylamides are exceedingly low.. It catalyses the reaction Release of an N-terminal amino acid, preferentially leucine, but not glutamic or aspartic acids.. Presumably involved in the processing and regular turnover of intracellular proteins. Catalyzes the removal of unsubstituted N-terminal amino acids from various peptides. In Nitrosomonas eutropha (strain DSM 101675 / C91 / Nm57), this protein is Probable cytosol aminopeptidase.